Here is an 87-residue protein sequence, read N- to C-terminus: Xibalbin-2 (87 aa).

The N-terminal stretch at 1–25 is a signal peptide; the sequence is MKGVCTRKVLYFFMAVILFVAIVAS. Positions 26-45 are excised as a propeptide; the sequence is EDTENRNPAMAMPLQRMEQE.

Belongs to the xibalbin-2 family. Contains 5 disulfide bonds. In terms of tissue distribution, expressed by the venom gland. Not found in the whole body.

It is found in the secreted. Functionally, probable neurotoxin. Moderately inhibits voltage-gated potassium channels (Kv1.1/KCNA1, Kv1.2/KCNA2, Kv1.3/KCNA3, and Kv1.6/KCNA6, with the highest toxicity against Kv1.6 (73.2% inhibition at 1 uM)) and weakly inhibits sodium channels (Nav1.4/SCN4A). Does not activate protein kinase A type II (PKA-II) and MAP kinase Erk1/2 in sensory neurons. Does not show cytotoxic activity. Does not have an impact on Ca2+, cAMP, and NO signaling in the cell types analyzed. Does not interfere with the adhesion of leukocytes to endothelial cells. Its function is as follows. Moderately inhibits voltage-gated potassium channels (Kv1.1/KCNA1, Kv1.2/KCNA2, Kv1.3/KCNA3, and Kv1.6/KCNA6, with the highest toxicity against Kv1.6 (75.9% inhibition at 1 uM)). Does not activate protein kinase A type II (PKA-II) and MAP kinase Erk1/2 in sensory neurons. Does not show cytotoxic activity. Does not have an impact on Ca2+, cAMP, and NO signaling in the cell types analyzed. Does not interfere with the adhesion of leukocytes to endothelial cells. This chain is Xibalbin-2, found in Xibalbanus tulumensis (Blind cave remipede).